We begin with the raw amino-acid sequence, 126 residues long: Small ribosomal subunit protein uS13 (126 aa).

The tract at residues 98–126 (PLRGQSTKNNARTRKGKKKTVANKKKATK) is disordered. The span at 108 to 126 (ARTRKGKKKTVANKKKATK) shows a compositional bias: basic residues.

Belongs to the universal ribosomal protein uS13 family. In terms of assembly, part of the 30S ribosomal subunit. Forms a loose heterodimer with protein S19. Forms two bridges to the 50S subunit in the 70S ribosome.

Located at the top of the head of the 30S subunit, it contacts several helices of the 16S rRNA. In the 70S ribosome it contacts the 23S rRNA (bridge B1a) and protein L5 of the 50S subunit (bridge B1b), connecting the 2 subunits; these bridges are implicated in subunit movement. Contacts the tRNAs in the A and P-sites. The sequence is that of Small ribosomal subunit protein uS13 from Parabacteroides distasonis (strain ATCC 8503 / DSM 20701 / CIP 104284 / JCM 5825 / NCTC 11152).